Here is a 101-residue protein sequence, read N- to C-terminus: Urease subunit beta 1 (101 aa).

This sequence belongs to the urease beta subunit family. In terms of assembly, heterotrimer of UreA (gamma), UreB (beta) and UreC (alpha) subunits. Three heterotrimers associate to form the active enzyme.

It is found in the cytoplasm. It carries out the reaction urea + 2 H2O + H(+) = hydrogencarbonate + 2 NH4(+). It functions in the pathway nitrogen metabolism; urea degradation; CO(2) and NH(3) from urea (urease route): step 1/1. In terms of biological role, disruption of the ure1 gene cluster suggests that it protects brucellae during their passage through the stomach. The major route of infection in human brucellosis is oral. The chain is Urease subunit beta 1 from Brucella abortus (strain 2308).